The following is a 2201-amino-acid chain: Voltage-dependent T-type calcium channel subunit alpha-1I (2201 aa).

The segment at 1–45 (MADSNLPPSSAAAPAPEPGITEQPGPRSPPPSPPGLEEPLEGTNP) is disordered. Topologically, residues 1-76 (MADSNLPPSS…RNWCIKMVCN (76 aa)) are cytoplasmic. Over residues 26–36 (PRSPPPSPPGL) the composition is skewed to pro residues. One copy of the I repeat lies at 64–399 (TSPRNWCIKM…LCLVVIATQF (336 aa)). The chain crosses the membrane as a helical span at residues 77–97 (PWFECVSMLVILLNCVTLGMY). Over 98–115 (QPCDDMECLSDRCKILQV) the chain is Extracellular. A helical membrane pass occupies residues 116 to 137 (FDDFIFIFFAMEMVLKMVALGI). The Cytoplasmic portion of the chain corresponds to 138-146 (FGKKCYLGD). The chain crosses the membrane as a helical span at residues 147–166 (TWNRLDFFIVMAGMVEYSLD). The Extracellular segment spans residues 167 to 171 (LQNIN). Residue N171 is glycosylated (N-linked (GlcNAc...) asparagine). The chain crosses the membrane as a helical span at residues 172-189 (LSAIRTVRVLRPLKAINR). Residues 190-209 (VPSMRILVNLLLDTLPMLGN) lie on the Cytoplasmic side of the membrane. The chain crosses the membrane as a helical span at residues 210-230 (VLLLCFFVFFIFGIIGVQLWA). Residues 231–371 (GLLRNRCFLE…YYVMDAHSFY (141 aa)) are Extracellular-facing. 2 N-linked (GlcNAc...) asparagine glycosylation sites follow: N242 and N309. Residues 372–396 (NFIYFILLIIVGSFFMINLCLVVIA) form a helical membrane-spanning segment. Residues 397-598 (TQFSETKQRE…EKLRGIVDSK (202 aa)) lie on the Cytoplasmic side of the membrane. 2 disordered regions span residues 463-500 (QAMG…TPHT) and 513-579 (PSSC…AARL). Over residues 545 to 554 (SAEAEANGDG) the composition is skewed to low complexity. One copy of the II repeat lies at 584–823 (WRETREKLRG…LLVAILVEGF (240 aa)). Residues 599–619 (YFNRGIMMAILVNTVSMGIEH) form a helical membrane-spanning segment. At 620–632 (HEQPEELTNILEI) the chain is on the extracellular side. The helical transmembrane segment at 633 to 654 (CNVVFTSMFALEMILKLAAFGL) threads the bilayer. The Cytoplasmic segment spans residues 655–660 (FDYLRN). The helical transmembrane segment at 661 to 679 (PYNIFDSIIVIISIWEIVG) threads the bilayer. At 680-687 (QADGGLSV) the chain is on the extracellular side. The helical transmembrane segment at 688-711 (LRTFRLLRVLKLVRFMPALRRQLV) threads the bilayer. Residues 712 to 722 (VLMKTMDNVAT) lie on the Cytoplasmic side of the membrane. A helical transmembrane segment spans residues 723–743 (FCMLLMLFIFIFSILGMHIFG). Over 744–795 (CKFSLRTDTGDTVPDRKNFDSLLWAIVTVFQILTQEDWNVVLYNGMASTTPW) the chain is Extracellular. Residues 796–820 (ASLYFVALMTFGNYVLFNLLVAILV) traverse the membrane as a helical segment. The Cytoplasmic portion of the chain corresponds to 821 to 1125 (EGFQAEGDAN…NKFRILCQTI (305 aa)). Positions 936–969 (WGRSGTWASRRSSWNSLKHKPPSAEHESLLSGEG) are disordered. The span at 941 to 951 (TWASRRSSWNS) shows a compositional bias: polar residues. Phosphoserine is present on S1017. One copy of the III repeat lies at 1116–1393 (NKFRILCQTI…MFVGVVVENF (278 aa)). Residues 1126–1148 (IAHKLFDYVVLAFIFLNCITIAL) traverse the membrane as a helical segment. Residues 1149–1166 (ERPQIEAGSTERIFLTVS) lie on the Extracellular side of the membrane. A helical transmembrane segment spans residues 1167 to 1187 (NYIFTAIFVGEMTLKVVSLGL). Topologically, residues 1188–1197 (YFGEQAYLRS) are cytoplasmic. A helical membrane pass occupies residues 1198–1217 (SWNVLDGFLVFVSIIDIVVS). At 1218–1231 (VASAGGAKILGVLR) the chain is on the extracellular side. Residues 1232–1253 (VLRLLRTLRPLRVISRAPGLKL) form a helical membrane-spanning segment. At 1254–1263 (VVETLISSLK) the chain is on the cytoplasmic side. Residues 1264-1287 (PIGNIVLICCAFFIIFGILGVQLF) form a helical membrane-spanning segment. Topologically, residues 1288–1364 (KGKFYHCLGV…DQQPVTNHNP (77 aa)) are extracellular. N-linked (GlcNAc...) asparagine glycans are attached at residues N1301 and N1304. The helical transmembrane segment at 1365–1390 (WMLLYFISFLLIVSFFVLNMFVGVVV) threads the bilayer. Residues 1391–1445 (ENFHKCRQHQEAEEARRREEKRLRRLEKKRRKAQRLPYYATYCPTRLLIHSMCTS) lie on the Cytoplasmic side of the membrane. One copy of the IV repeat lies at 1431 to 1692 (TYCPTRLLIH…VVVAVLMKHL (262 aa)). The chain crosses the membrane as a helical span at residues 1446–1466 (HYLDIFITFIICLNVVTMSLE). The Extracellular portion of the chain corresponds to 1467–1480 (HYNQPTSLETALKY). Residues 1481–1502 (CNYMFTTVFVLEAVLKLVAFGL) form a helical membrane-spanning segment. Residues 1503 to 1509 (RRFFKDR) are Cytoplasmic-facing. Residues 1510–1528 (WNQLDLAIVLLSVMGITLE) form a helical membrane-spanning segment. At 1529–1542 (EIEINAALPINPTI) the chain is on the extracellular side. The chain crosses the membrane as a helical span at residues 1543–1566 (IRIMRVLRIARVLKLLKMATGMRA). Residues 1567–1580 (LLDTVVQALPQVGN) lie on the Cytoplasmic side of the membrane. A helical membrane pass occupies residues 1581 to 1601 (LGLLFMLLFFIYAALGVELFG). Residues 1602–1664 (KLVCNDENPC…RSCLSSLQFV (63 aa)) are Extracellular-facing. A helical transmembrane segment spans residues 1665 to 1692 (SPLYFVSFVLTAQFVLINVVVAVLMKHL). The Cytoplasmic portion of the chain corresponds to 1693–1835 (DDSNKEAQED…EVQLAETEAF (143 aa)). Disordered regions lie at residues 1846–1876 (LLGD…PEPM), 1916–1938 (LKHD…PLLQ), 1992–2045 (SDTS…TRRR), 2057–2105 (RGLR…HSET), and 2126–2201 (LTPA…KRKR). Positions 1992-2007 (SDTSLDASPSSSAGSL) are enriched in low complexity. Polar residues-rich tracts occupy residues 2008-2019 (QTTLEDSLTLSD) and 2066-2075 (HSSGGSTSPG). Residues 2077-2090 (THHDSMDPSDEEGR) are compositionally biased toward basic and acidic residues.

Belongs to the calcium channel alpha-1 subunit (TC 1.A.1.11) family. CACNA1I subfamily. As to quaternary structure, interacts with CATSPER1 and CATSPER2, leading to suppress T-type calcium channel activity. In response to raising of intracellular calcium, the T-type channels are activated by CaM-kinase II. As to expression, brain.

It localises to the membrane. It carries out the reaction Ca(2+)(in) = Ca(2+)(out). Voltage-sensitive calcium channels (VSCC) mediate the entry of calcium ions into excitable cells and are also involved in a variety of calcium-dependent processes, including muscle contraction, hormone or neurotransmitter release, gene expression, cell motility, cell division and cell death. This channel gives rise to T-type calcium currents. T-type calcium channels belong to the 'low-voltage activated (LVA)' group and are strongly blocked by nickel and mibefradil. A particularity of this type of channels is an opening at quite negative potentials, and a voltage-dependent inactivation. T-type channels serve pacemaking functions in both central neurons and cardiac nodal cells and support calcium signaling in secretory cells and vascular smooth muscle. They may also be involved in the modulation of firing patterns of neurons which is important for information processing as well as in cell growth processes. Gates in voltage ranges similar to, but higher than alpha 1G or alpha 1H. Functionally, voltage-sensitive calcium channels (VSCC) mediate the entry of calcium ions into excitable cells and are also involved in a variety of calcium-dependent processes, including muscle contraction, hormone or neurotransmitter release, gene expression, cell motility, cell division and cell death. This channel gives rise to T-type calcium currents. This is Voltage-dependent T-type calcium channel subunit alpha-1I (Cacna1i) from Rattus norvegicus (Rat).